The chain runs to 224 residues: Metalloproteinase inhibitor 4 (224 aa).

The N-terminal stretch at methionine 1 to alanine 29 is a signal peptide. Cysteine 30 provides a ligand contact to Zn(2+). 2 involved in metalloproteinase-binding regions span residues cysteine 30–alanine 33 and serine 99–serine 100. Cystine bridges form between cysteine 30–cysteine 102, cysteine 32–cysteine 131, cysteine 42–cysteine 156, cysteine 158–cysteine 205, cysteine 163–cysteine 168, and cysteine 176–cysteine 197. The NTR domain maps to cysteine 30 to cysteine 156.

The protein belongs to the protease inhibitor I35 (TIMP) family. In terms of tissue distribution, expressed in brain, heart, ovary and skeletal muscle.

The protein resides in the secreted. Its function is as follows. Complexes with metalloproteinases (such as collagenases) and irreversibly inactivates them by binding to their catalytic zinc cofactor. The polypeptide is Metalloproteinase inhibitor 4 (Timp4) (Mus musculus (Mouse)).